The chain runs to 747 residues: Probable copper-transporting ATPase PacS (747 aa).

The Cytoplasmic segment spans residues 1-101 (MVNQQTLTLR…RQLAQRVWVS (101 aa)). The HMA domain occupies 3–69 (NQQTLTLRGM…AIEAAGYHAF (67 aa)). Residues cysteine 14 and cysteine 17 each contribute to the a metal cation site. A helical transmembrane segment spans residues 102 to 122 (GLIASLLVIGSLPMMLGISIP). Residues 123 to 132 (GIPMWLHHPG) lie on the Extracellular side of the membrane. Residues 133–151 (LQLGLTLPVLWAGRSFFIN) form a helical membrane-spanning segment. Residues 152-158 (AWKAFRQ) are Cytoplasmic-facing. A helical transmembrane segment spans residues 159–179 (NTATMDTLVAVGTGAAFLYSL). Residues 180 to 199 (AVTLFPQWLTRQGLPPDVYY) lie on the Extracellular side of the membrane. Residues 200–220 (EAIAVIIALLLLGRSLEERAK) form a helical membrane-spanning segment. Residues 221–348 (GQTSAAIRQL…KAPIQRLADQ (128 aa)) are Cytoplasmic-facing. Residues 349–371 (VTGWFVPAVIAIAILTFVLWFNW) form a helical membrane-spanning segment. Topologically, residues 372–378 (IGNVTLA) are extracellular. The helical transmembrane segment at 379–396 (LITAVGVLIIACPCALGL) threads the bilayer. The Cytoplasmic segment spans residues 397–688 (ATPTSIMVGT…QLSRATMTNI (292 aa)). Aspartate 434 (4-aspartylphosphate intermediate) is an active-site residue. Positions 634 and 638 each coordinate Mg(2+). Residues 689-708 (RQNLFFAFIYNVAGIPIAAG) traverse the membrane as a helical segment. The Extracellular segment spans residues 709-720 (ILYPLLGWLLSP). The helical transmembrane segment at 721 to 739 (MLAGAAMAFSSVSVVTNAL) threads the bilayer. Residues 740–747 (RLRQFQPR) are Cytoplasmic-facing.

It belongs to the cation transport ATPase (P-type) (TC 3.A.3) family. Type IB subfamily.

The protein localises to the cell membrane. The enzyme catalyses Cu(+)(in) + ATP + H2O = Cu(+)(out) + ADP + phosphate + H(+). Its function is as follows. May play a role in the osmotic adaptation. The chain is Probable copper-transporting ATPase PacS (pacS) from Synechococcus elongatus (strain ATCC 33912 / PCC 7942 / FACHB-805) (Anacystis nidulans R2).